The primary structure comprises 489 residues: Betaine aldehyde dehydrogenase (489 aa).

K(+) is bound by residues threonine 26 and aspartate 93. Residue 150–152 (GAW) participates in NAD(+) binding. The active-site Charge relay system is the lysine 162. 176–179 (KPSE) serves as a coordination point for NAD(+). A K(+)-binding site is contributed by valine 180. 229–232 (GVET) lines the NAD(+) pocket. Leucine 245 contributes to the K(+) binding site. Glutamate 251 functions as the Proton acceptor in the catalytic mechanism. Residues glycine 253, cysteine 285, and glutamate 386 each contribute to the NAD(+) site. The active-site Nucleophile is cysteine 285. Cysteine sulfenic acid (-SOH) is present on cysteine 285. K(+) contacts are provided by lysine 456 and glycine 459. Glutamate 463 acts as the Charge relay system in catalysis.

This sequence belongs to the aldehyde dehydrogenase family. Dimer of dimers. Requires K(+) as cofactor.

It carries out the reaction betaine aldehyde + NAD(+) + H2O = glycine betaine + NADH + 2 H(+). It participates in amine and polyamine biosynthesis; betaine biosynthesis via choline pathway; betaine from betaine aldehyde: step 1/1. Its function is as follows. Involved in the biosynthesis of the osmoprotectant glycine betaine. Catalyzes the irreversible oxidation of betaine aldehyde to the corresponding acid. This chain is Betaine aldehyde dehydrogenase, found in Burkholderia lata (strain ATCC 17760 / DSM 23089 / LMG 22485 / NCIMB 9086 / R18194 / 383).